A 132-amino-acid polypeptide reads, in one-letter code: Agouti-signaling protein (132 aa).

Positions 1–22 are cleaved as a signal peptide; that stretch reads MDVTRLLLATLLVFLCFFTAYS. Asn39 carries an N-linked (GlcNAc...) asparagine glycan. The segment at 62–88 is disordered; it reads ISRKEAEKKRSSKKEASMKKVARPRTP. Basic and acidic residues predominate over residues 63–79; the sequence is SRKEAEKKRSSKKEASM. Cystine bridges form between Cys93/Cys108, Cys100/Cys114, Cys107/Cys125, Cys111/Cys132, and Cys116/Cys123. An Agouti domain is found at 93-132; the sequence is CVATRDSCKPPAPACCDPCASCQCRFFRSACSCRVLSLNC.

Its subcellular location is the secreted. Involved in the regulation of melanogenesis. The binding of ASP to MC1R precludes alpha-MSH initiated signaling and thus blocks production of cAMP, leading to a down-regulation of eumelanogenesis (brown/black pigment) and thus increasing synthesis of pheomelanin (yellow/red pigment). This is Agouti-signaling protein (ASIP) from Chlorocebus aethiops (Green monkey).